The sequence spans 239 residues: Fatty acid metabolism regulator protein (239 aa).

The HTH gntR-type domain occupies 6–74; it reads QSPAGFAEEY…HGKPTKVNNF (69 aa). A DNA-binding region (H-T-H motif) is located at residues 34 to 53; the sequence is ERELSELIGVTRTTLREVLQ.

As to quaternary structure, homodimer.

Its subcellular location is the cytoplasm. Functionally, multifunctional regulator of fatty acid metabolism. The chain is Fatty acid metabolism regulator protein from Klebsiella pneumoniae (strain 342).